The primary structure comprises 257 residues: MTKTLTKKLANKDHASVVTYIMGGDGGLDNLEEQLLFLEKSGVSAIEIGIPFSDPVADGPVIQLAGLRALKERVSLEAILTKLATSKVQIPLIIMSYINPIFHLGIPKFIEMVQKTPVKGLIIPDLPYEHRTLITPELKGTDIALIPLVSLTSPKERLEEIANQAEGFIYAVTVNGTTGVRNEFNTHIDTHLAYLKSISPVPVLAGFGVSSIEHVEKFARVCDGVIIGSKVVQMLHDGETRELGTFLQNAAEVQIEN.

Residues E47 and D58 each act as proton acceptor in the active site.

The protein belongs to the TrpA family. In terms of assembly, tetramer of two alpha and two beta chains.

It carries out the reaction (1S,2R)-1-C-(indol-3-yl)glycerol 3-phosphate + L-serine = D-glyceraldehyde 3-phosphate + L-tryptophan + H2O. It functions in the pathway amino-acid biosynthesis; L-tryptophan biosynthesis; L-tryptophan from chorismate: step 5/5. Its function is as follows. The alpha subunit is responsible for the aldol cleavage of indoleglycerol phosphate to indole and glyceraldehyde 3-phosphate. This Listeria innocua serovar 6a (strain ATCC BAA-680 / CLIP 11262) protein is Tryptophan synthase alpha chain.